Reading from the N-terminus, the 34-residue chain is Photosystem II reaction center protein Psb30 (34 aa).

A helical membrane pass occupies residues 6-26 (VIGQLVSTGAIMLLGPAIIIL).

This sequence belongs to the Psb30/Ycf12 family. PSII is composed of 1 copy each of membrane proteins PsbA, PsbB, PsbC, PsbD, PsbE, PsbF, PsbH, PsbI, PsbJ, PsbK, PsbL, PsbM, PsbT, PsbX, PsbY, PsbZ, Psb30/Ycf12, peripheral proteins of the oxygen-evolving complex and a large number of cofactors. It forms dimeric complexes.

Its subcellular location is the plastid. The protein localises to the chloroplast thylakoid membrane. In terms of biological role, a core subunit of photosystem II (PSII), probably helps stabilize the reaction center. In Thalassiosira pseudonana (Marine diatom), this protein is Photosystem II reaction center protein Psb30.